The sequence spans 318 residues: 2,4-dinitroanisole O-demethylase subunit beta (318 aa).

The protein belongs to the metallo-beta-lactamase superfamily. In terms of assembly, part of the complex DnhAB composed of the 2,4-dinitroanisole O-demethylase alpha (DnhA) and beta (DnhB) subunits.

It catalyses the reaction 2,4-dinitroanisole + H2O = 2,4-dinitrophenol + methanol + H(+). In terms of biological role, involved in the degradation of 2,4-dinitroanisole (DNAN), an insensitive munition ingredient used in explosive formulations as a replacement for 2,4,6-trinitrotoluene (TNT). Catalyzes the removal of the methyl group from 2,4-dinitroanisole (DNAN) to yield 2,4-dinitrophenol (2,4-DNP) and methanol. In Nocardioides sp. (strain JS1661), this protein is 2,4-dinitroanisole O-demethylase subunit beta.